A 215-amino-acid polypeptide reads, in one-letter code: ATP-dependent dethiobiotin synthetase BioD (215 aa).

Residue 13 to 18 (DIGKTV) participates in ATP binding. T17 contributes to the Mg(2+) binding site. K38 is a catalytic residue. T42 provides a ligand contact to substrate. ATP is bound by residues D50, 115 to 118 (EGAG), and 175 to 176 (NH). Mg(2+) contacts are provided by D50 and E115.

The protein belongs to the dethiobiotin synthetase family. Homodimer. Mg(2+) is required as a cofactor.

It is found in the cytoplasm. The catalysed reaction is (7R,8S)-7,8-diammoniononanoate + CO2 + ATP = (4R,5S)-dethiobiotin + ADP + phosphate + 3 H(+). It functions in the pathway cofactor biosynthesis; biotin biosynthesis; biotin from 7,8-diaminononanoate: step 1/2. In terms of biological role, catalyzes a mechanistically unusual reaction, the ATP-dependent insertion of CO2 between the N7 and N8 nitrogen atoms of 7,8-diaminopelargonic acid (DAPA, also called 7,8-diammoniononanoate) to form a ureido ring. The protein is ATP-dependent dethiobiotin synthetase BioD of Neisseria meningitidis serogroup B (strain ATCC BAA-335 / MC58).